A 345-amino-acid polypeptide reads, in one-letter code: S-adenosylmethionine:tRNA ribosyltransferase-isomerase (345 aa).

It belongs to the QueA family. As to quaternary structure, monomer.

Its subcellular location is the cytoplasm. It catalyses the reaction 7-aminomethyl-7-carbaguanosine(34) in tRNA + S-adenosyl-L-methionine = epoxyqueuosine(34) in tRNA + adenine + L-methionine + 2 H(+). It functions in the pathway tRNA modification; tRNA-queuosine biosynthesis. In terms of biological role, transfers and isomerizes the ribose moiety from AdoMet to the 7-aminomethyl group of 7-deazaguanine (preQ1-tRNA) to give epoxyqueuosine (oQ-tRNA). The sequence is that of S-adenosylmethionine:tRNA ribosyltransferase-isomerase from Shewanella oneidensis (strain ATCC 700550 / JCM 31522 / CIP 106686 / LMG 19005 / NCIMB 14063 / MR-1).